A 240-amino-acid polypeptide reads, in one-letter code: UDP-2,3-diacylglucosamine hydrolase (240 aa).

Residues D8, H10, D41, N79, and H114 each contribute to the Mn(2+) site. 79–80 lines the substrate pocket; the sequence is NR. D122, S160, N164, K167, and H195 together coordinate substrate. The Mn(2+) site is built by H195 and H197.

It belongs to the LpxH family. The cofactor is Mn(2+).

The protein resides in the cell inner membrane. It catalyses the reaction UDP-2-N,3-O-bis[(3R)-3-hydroxytetradecanoyl]-alpha-D-glucosamine + H2O = 2-N,3-O-bis[(3R)-3-hydroxytetradecanoyl]-alpha-D-glucosaminyl 1-phosphate + UMP + 2 H(+). It functions in the pathway glycolipid biosynthesis; lipid IV(A) biosynthesis; lipid IV(A) from (3R)-3-hydroxytetradecanoyl-[acyl-carrier-protein] and UDP-N-acetyl-alpha-D-glucosamine: step 4/6. In terms of biological role, hydrolyzes the pyrophosphate bond of UDP-2,3-diacylglucosamine to yield 2,3-diacylglucosamine 1-phosphate (lipid X) and UMP by catalyzing the attack of water at the alpha-P atom. Involved in the biosynthesis of lipid A, a phosphorylated glycolipid that anchors the lipopolysaccharide to the outer membrane of the cell. This Escherichia coli O6:K15:H31 (strain 536 / UPEC) protein is UDP-2,3-diacylglucosamine hydrolase.